We begin with the raw amino-acid sequence, 510 residues long: 2,3-bisphosphoglycerate-independent phosphoglycerate mutase (510 aa).

Asp12 serves as a coordination point for Mn(2+). Tyr36 is modified (phosphotyrosine). Residue Ser62 participates in Mn(2+) binding. The Phosphoserine intermediate role is filled by Ser62. Substrate contacts are provided by residues His123, 153-154 (RD), Arg185, Arg191, 261-264 (RPDR), and Lys336. Mn(2+) contacts are provided by Asp403, His407, Asp444, His445, and His462.

It belongs to the BPG-independent phosphoglycerate mutase family. As to quaternary structure, monomer. Mn(2+) serves as cofactor.

It carries out the reaction (2R)-2-phosphoglycerate = (2R)-3-phosphoglycerate. It participates in carbohydrate degradation; glycolysis; pyruvate from D-glyceraldehyde 3-phosphate: step 3/5. Functionally, essential for rapid growth and for sporulation. Catalyzes the interconversion of 2-phosphoglycerate and 3-phosphoglycerate. The protein is 2,3-bisphosphoglycerate-independent phosphoglycerate mutase of Shouchella clausii (strain KSM-K16) (Alkalihalobacillus clausii).